An 88-amino-acid chain; its full sequence is Small ribosomal subunit protein uS15 (88 aa).

It belongs to the universal ribosomal protein uS15 family. Part of the 30S ribosomal subunit. Forms a bridge to the 50S subunit in the 70S ribosome, contacting the 23S rRNA.

Its function is as follows. One of the primary rRNA binding proteins, it binds directly to 16S rRNA where it helps nucleate assembly of the platform of the 30S subunit by binding and bridging several RNA helices of the 16S rRNA. In terms of biological role, forms an intersubunit bridge (bridge B4) with the 23S rRNA of the 50S subunit in the ribosome. This is Small ribosomal subunit protein uS15 from Leptospira biflexa serovar Patoc (strain Patoc 1 / Ames).